A 263-amino-acid chain; its full sequence is N-acyl homoserine lactonase AttM (263 aa).

Positions 103, 105, 107, 108, 180, 202, and 247 each coordinate Zn(2+).

This sequence belongs to the metallo-beta-lactamase superfamily. It depends on Zn(2+) as a cofactor.

The catalysed reaction is an N-acyl-L-homoserine lactone + H2O = an N-acyl-L-homoserine + H(+). In Azorhizobium caulinodans (strain ATCC 43989 / DSM 5975 / JCM 20966 / LMG 6465 / NBRC 14845 / NCIMB 13405 / ORS 571), this protein is N-acyl homoserine lactonase AttM.